The chain runs to 248 residues: Probable capsular polysaccharide biosynthesis protein YwqC (248 aa).

The next 2 membrane-spanning stretches (helical) occupy residues 18–38 (ILLIMIVTAAATAAGGLISFF) and 174–194 (LLNIAIAFAAGLAGSIGLAFL).

This sequence belongs to the CpsC/CapA family. Not phosphorylated in vitro by YwqD.

Its subcellular location is the cell membrane. It functions in the pathway capsule biogenesis; capsule polysaccharide biosynthesis. Functionally, required for YwqD kinase activity. May bring YwqD and its substrates into contact. Probably involved in the regulation of capsular polysaccharide biosynthesis. The polypeptide is Probable capsular polysaccharide biosynthesis protein YwqC (ywqC) (Bacillus subtilis (strain 168)).